The chain runs to 790 residues: Vacuolar protein sorting-associated protein 35C (790 aa).

An N-acetylmethionine modification is found at M1.

Belongs to the VPS35 family. As to quaternary structure, component of the retromer complex which consists of VPS29 (MAG1), VPS26 (VPS26A or VPS26B), VPS35 (VPS35A or VPS35B or VPS35C), VPS5/17 (SNX1 or SNX2A or SNX2B). Component of a retromer subcomplex consisting of VPS29 (MAG1), VPS26 (VPS26A or VPS26B), VPS35 (VPS35A or VPS35B or VPS35C).

The protein resides in the cytoplasm. It localises to the endosome membrane. The protein localises to the prevacuolar compartment membrane. Its subcellular location is the golgi apparatus. It is found in the trans-Golgi network membrane. Functionally, plays a role in vesicular protein sorting. Component of the membrane-associated retromer complex which is essential in endosome-to-Golgi retrograde transport. Also involved in the efficient sorting of seed storage proteins. The VPS29-VPS26-VPS35 subcomplex may be involved in recycling of specific cargos from endosome to the plasma membrane. This is Vacuolar protein sorting-associated protein 35C (VPS35C) from Arabidopsis thaliana (Mouse-ear cress).